Here is a 320-residue protein sequence, read N- to C-terminus: ATP-dependent 6-phosphofructokinase (320 aa).

G12 provides a ligand contact to ATP. Residues 22–26 and 55–60 each bind ADP; these read RGVVR and RYSVSD. ATP-binding positions include 73-74 and 103-106; these read RF and GDGS. A Mg(2+)-binding site is contributed by D104. Residue 126–128 participates in substrate binding; sequence TID. Catalysis depends on D128, which acts as the Proton acceptor. Position 155 (R155) interacts with ADP. Residues R163 and 170–172 contribute to the substrate site; that span reads MGR. Residues 186-188, K212, and 214-216 each bind ADP; these read GCE and KKH. Residues E223, R244, and 250–253 contribute to the substrate site; that span reads HIQR.

Belongs to the phosphofructokinase type A (PFKA) family. ATP-dependent PFK group I subfamily. Prokaryotic clade 'B1' sub-subfamily. As to quaternary structure, homotetramer. It depends on Mg(2+) as a cofactor.

It localises to the cytoplasm. It catalyses the reaction beta-D-fructose 6-phosphate + ATP = beta-D-fructose 1,6-bisphosphate + ADP + H(+). It participates in carbohydrate degradation; glycolysis; D-glyceraldehyde 3-phosphate and glycerone phosphate from D-glucose: step 3/4. With respect to regulation, allosterically activated by ADP and other diphosphonucleosides, and allosterically inhibited by phosphoenolpyruvate. Functionally, catalyzes the phosphorylation of D-fructose 6-phosphate to fructose 1,6-bisphosphate by ATP, the first committing step of glycolysis. In Sodalis glossinidius (strain morsitans), this protein is ATP-dependent 6-phosphofructokinase.